A 483-amino-acid polypeptide reads, in one-letter code: Cysteine--tRNA ligase (483 aa).

Cys27 contributes to the Zn(2+) binding site. A 'HIGH' region motif is present at residues Ile29–His39. Cys208, His231, and Glu235 together coordinate Zn(2+). Residues Lys263 to Ser267 carry the 'KMSKS' region motif. Lys266 contacts ATP.

This sequence belongs to the class-I aminoacyl-tRNA synthetase family. As to quaternary structure, monomer. The cofactor is Zn(2+).

Its subcellular location is the cytoplasm. The catalysed reaction is tRNA(Cys) + L-cysteine + ATP = L-cysteinyl-tRNA(Cys) + AMP + diphosphate. The protein is Cysteine--tRNA ligase of Desulfovibrio desulfuricans (strain ATCC 27774 / DSM 6949 / MB).